Reading from the N-terminus, the 194-residue chain is Crossover junction endodeoxyribonuclease RuvC (194 aa).

Catalysis depends on residues aspartate 8, glutamate 72, and aspartate 144. 3 residues coordinate Mg(2+): aspartate 8, glutamate 72, and aspartate 144.

This sequence belongs to the RuvC family. As to quaternary structure, homodimer which binds Holliday junction (HJ) DNA. The HJ becomes 2-fold symmetrical on binding to RuvC with unstacked arms; it has a different conformation from HJ DNA in complex with RuvA. In the full resolvosome a probable DNA-RuvA(4)-RuvB(12)-RuvC(2) complex forms which resolves the HJ. Mg(2+) serves as cofactor.

The protein resides in the cytoplasm. It carries out the reaction Endonucleolytic cleavage at a junction such as a reciprocal single-stranded crossover between two homologous DNA duplexes (Holliday junction).. Functionally, the RuvA-RuvB-RuvC complex processes Holliday junction (HJ) DNA during genetic recombination and DNA repair. Endonuclease that resolves HJ intermediates. Cleaves cruciform DNA by making single-stranded nicks across the HJ at symmetrical positions within the homologous arms, yielding a 5'-phosphate and a 3'-hydroxyl group; requires a central core of homology in the junction. The consensus cleavage sequence is 5'-(A/T)TT(C/G)-3'. Cleavage occurs on the 3'-side of the TT dinucleotide at the point of strand exchange. HJ branch migration catalyzed by RuvA-RuvB allows RuvC to scan DNA until it finds its consensus sequence, where it cleaves and resolves the cruciform DNA. In Psychrobacter arcticus (strain DSM 17307 / VKM B-2377 / 273-4), this protein is Crossover junction endodeoxyribonuclease RuvC.